A 692-amino-acid polypeptide reads, in one-letter code: Catalase-B (692 aa).

Catalysis depends on residues histidine 69 and asparagine 142. Position 356 (tyrosine 356) interacts with heme.

This sequence belongs to the catalase family. The cofactor is heme.

The protein resides in the cytoplasm. It catalyses the reaction 2 H2O2 = O2 + 2 H2O. Occurs in almost all aerobically respiring organisms and serves to protect cells from the toxic effects of hydrogen peroxide. Its accumulation in prespore cells affords the spores protection from oxidation during prolonged dormancy. Required for normal developmental timing, possibly through a regulatory role in differentiation and morphogenesis. This is Catalase-B (catB) from Dictyostelium discoideum (Social amoeba).